The following is a 332-amino-acid chain: 2,3-diketo-L-gulonate reductase (332 aa).

Catalysis depends on histidine 44, which acts as the Proton donor. NAD(+)-binding positions include 168 to 174 (ITMVDMS), 224 to 225 (WK), and 304 to 306 (GHE).

This sequence belongs to the LDH2/MDH2 oxidoreductase family. DlgD subfamily. As to quaternary structure, homodimer.

The protein resides in the cytoplasm. It catalyses the reaction 3-dehydro-L-gulonate + NAD(+) = 2,3-dioxo-L-gulonate + NADH + H(+). It carries out the reaction 3-dehydro-L-gulonate + NADP(+) = 2,3-dioxo-L-gulonate + NADPH + H(+). Catalyzes the reduction of 2,3-diketo-L-gulonate in the presence of NADH, to form 3-keto-L-gulonate. The polypeptide is 2,3-diketo-L-gulonate reductase (Escherichia coli O81 (strain ED1a)).